A 162-amino-acid chain; its full sequence is Large ribosomal subunit protein uL11 (162 aa).

The tract at residues 1-27 (MAGTIEVLVPGGEANPGPPLGPELGPT) is disordered.

It belongs to the universal ribosomal protein uL11 family. In terms of assembly, part of the 50S ribosomal subunit. Forms part of the ribosomal stalk which helps the ribosome interact with GTP-bound translation factors. Forms a heptameric L10(L12)2(L12)2(L12)2 complex, where L10 forms an elongated spine to which 3 L12 dimers bind in a sequential fashion.

In terms of biological role, forms part of the ribosomal stalk which helps the ribosome interact with GTP-bound translation factors. In Haloarcula marismortui (strain ATCC 43049 / DSM 3752 / JCM 8966 / VKM B-1809) (Halobacterium marismortui), this protein is Large ribosomal subunit protein uL11.